We begin with the raw amino-acid sequence, 150 residues long: Deoxyuridine 5'-triphosphate nucleotidohydrolase (150 aa).

Residues 69–71 (RSG), Asn-82, and 86–88 (TID) contribute to the substrate site.

The protein belongs to the dUTPase family. The cofactor is Mg(2+).

The catalysed reaction is dUTP + H2O = dUMP + diphosphate + H(+). It functions in the pathway pyrimidine metabolism; dUMP biosynthesis; dUMP from dCTP (dUTP route): step 2/2. Functionally, this enzyme is involved in nucleotide metabolism: it produces dUMP, the immediate precursor of thymidine nucleotides and it decreases the intracellular concentration of dUTP so that uracil cannot be incorporated into DNA. The sequence is that of Deoxyuridine 5'-triphosphate nucleotidohydrolase from Syntrophus aciditrophicus (strain SB).